Reading from the N-terminus, the 337-residue chain is DNA-directed RNA polymerase subunit alpha (337 aa).

Positions 1–226 (MLIAQRPTLT…ELFGLARELN (226 aa)) are alpha N-terminal domain (alpha-NTD). Positions 243-337 (LAADLALEIE…DTSFAEDEQL (95 aa)) are alpha C-terminal domain (alpha-CTD). Residues 315-337 (FDPSAVVNDFEDDDTSFAEDEQL) are disordered. Over residues 323 to 337 (DFEDDDTSFAEDEQL) the composition is skewed to acidic residues.

Belongs to the RNA polymerase alpha chain family. In terms of assembly, homodimer. The RNAP catalytic core consists of 2 alpha, 1 beta, 1 beta' and 1 omega subunit. When a sigma factor is associated with the core the holoenzyme is formed, which can initiate transcription.

It carries out the reaction RNA(n) + a ribonucleoside 5'-triphosphate = RNA(n+1) + diphosphate. Functionally, DNA-dependent RNA polymerase catalyzes the transcription of DNA into RNA using the four ribonucleoside triphosphates as substrates. The sequence is that of DNA-directed RNA polymerase subunit alpha from Kineococcus radiotolerans (strain ATCC BAA-149 / DSM 14245 / SRS30216).